The following is a 344-amino-acid chain: Lysophosphatidic acid receptor 6 (344 aa).

At 1–25 (MVSSNGSQCPYDDSFKYTLYGCMFS) the chain is on the extracellular side. Asn-5 carries N-linked (GlcNAc...) asparagine glycosylation. A helical transmembrane segment spans residues 26-46 (MVFVLGLISNCVAIYIFICAL). The Cytoplasmic segment spans residues 47–56 (KVRNETTTYM). Residues 57–77 (INLAMSDLLFVFTLPFRIFYF) traverse the membrane as a helical segment. Residues 78 to 90 (ATRNWPFGDLLCK) lie on the Extracellular side of the membrane. An intrachain disulfide couples Cys-89 to Cys-168. The chain crosses the membrane as a helical span at residues 91–111 (ISVMLFYTNMYGSILFLTCIS). Over 112 to 134 (VDRFLAIVYPFKSKTLRTKRNAK) the chain is Cytoplasmic. A helical membrane pass occupies residues 135–155 (IVCIAVWFTVMGGSAPAVFFQ). Residues 156 to 183 (STHSQGNNTSEACFENFPAATWKTYLSR) are Extracellular-facing. Asn-162 and Asn-163 each carry an N-linked (GlcNAc...) asparagine glycan. The chain crosses the membrane as a helical span at residues 184 to 204 (IVIFIEIVGFFIPLILNVTCS). Topologically, residues 205 to 230 (SMVLRTLNKPVTLSRSKMNKTKVLKM) are cytoplasmic. Residues 231–251 (IFVHLVIFCFCFVPYNINLIL) form a helical membrane-spanning segment. Over 252-272 (YSLMRTQTFVNCSVVAAVRTM) the chain is Extracellular. N-linked (GlcNAc...) asparagine glycosylation is present at Asn-262. Residues 273–293 (YPITLCIAVSNCCFDPIVYYF) traverse the membrane as a helical segment. A lipid anchor (S-palmitoyl cysteine) is attached at Cys-284. Residues 294-344 (TSDTIQNSIKMKNWSVRRSDSRFSEVQGTENFIQHNLQTLKNKIFDNESAI) are Cytoplasmic-facing.

Belongs to the G-protein coupled receptor 1 family. Ubiquitously expressed. Detected in the hair follicles and skin (at protein level).

Its subcellular location is the cell membrane. Its function is as follows. Binds to oleoyl-L-alpha-lysophosphatidic acid (LPA). Intracellular cAMP is involved in the receptor activation. Important for the maintenance of hair growth and texture. This is Lysophosphatidic acid receptor 6 (Lpar6) from Mus musculus (Mouse).